Reading from the N-terminus, the 639-residue chain is Protein artemis (639 aa).

Disordered regions lie at residues 450 to 496 (MDCT…LTSS), 515 to 570 (SELE…SQVD), and 590 to 617 (EAAE…VPQP). A compositionally biased stretch (acidic residues) spans 454–466 (ESNDDDDDEDDAA). A compositionally biased stretch (polar residues) spans 518-537 (ENSQNTQTLSTENTASQSPE). Positions 548 to 560 (VHMSSSQSTHISD) are enriched in low complexity.

It belongs to the DNA repair metallo-beta-lactamase (DRMBL) family.

The protein resides in the nucleus. Its function is as follows. May have a role in the processing of DNA double strand breaks (DSBs) prior to their repair by the non homologous end joining (NHEJ) pathway. Probably exhibits both exonuclease and endonuclease activity. The protein is Protein artemis (dclre1c) of Danio rerio (Zebrafish).